Consider the following 177-residue polypeptide: Large ribosomal subunit protein uL6 (177 aa).

Belongs to the universal ribosomal protein uL6 family. In terms of assembly, part of the 50S ribosomal subunit.

This protein binds to the 23S rRNA, and is important in its secondary structure. It is located near the subunit interface in the base of the L7/L12 stalk, and near the tRNA binding site of the peptidyltransferase center. The protein is Large ribosomal subunit protein uL6 of Stutzerimonas stutzeri (strain A1501) (Pseudomonas stutzeri).